We begin with the raw amino-acid sequence, 70 residues long: Cold shock-like protein CspH (70 aa).

Positions 7-67 constitute a CSD domain; the sequence is GIVKTFDCKS…GLRGPTAANV (61 aa).

It is found in the cytoplasm. The chain is Cold shock-like protein CspH (cspH) from Salmonella typhi.